The primary structure comprises 431 residues: Divergent protein kinase domain 1B (431 aa).

At methionine 1 to lysine 30 the chain is on the cytoplasmic side. A May mediate ER retention motif is present at residues arginine 5–arginine 6. Residues tyrosine 31–serine 51 traverse the membrane as a helical segment. Topologically, residues serine 52 to serine 431 are lumenal. 2 disulfides stabilise this stretch: cysteine 57–cysteine 94 and cysteine 62–cysteine 117.

Belongs to the DIPK family. In terms of processing, among the many cysteines in the lumenal domain, most are probably involved in disulfide bonds.

Its subcellular location is the endoplasmic reticulum membrane. This chain is Divergent protein kinase domain 1B, found in Rattus norvegicus (Rat).